Reading from the N-terminus, the 164-residue chain is Small ribosomal subunit protein uS3m (164 aa).

The N-terminal 23 residues, 1–23, are a transit peptide targeting the mitochondrion; it reads MLRSIQHVEALSSRQISTTSMLL.

This sequence belongs to the universal ribosomal protein uS3 family. In terms of assembly, component of the mitochondrial ribosome small subunit (28S) which comprises a 12S rRNA and about 30 distinct proteins.

The protein resides in the mitochondrion. This is Small ribosomal subunit protein uS3m (mrps-24) from Caenorhabditis elegans.